Here is a 232-residue protein sequence, read N- to C-terminus: Sugar fermentation stimulation protein homolog (232 aa).

The protein belongs to the SfsA family.

The chain is Sugar fermentation stimulation protein homolog from Alkaliphilus metalliredigens (strain QYMF).